Consider the following 447-residue polypeptide: N-succinylarginine dihydrolase (447 aa).

Substrate is bound by residues 19 to 28 (AGLSFGNEAS), Asn110, and 137 to 138 (HR). The active site involves Glu174. Arg212 provides a ligand contact to substrate. His248 is a catalytic residue. 2 residues coordinate substrate: Asp250 and Asn359. Catalysis depends on Cys365, which acts as the Nucleophile.

Belongs to the succinylarginine dihydrolase family. As to quaternary structure, homodimer.

The catalysed reaction is N(2)-succinyl-L-arginine + 2 H2O + 2 H(+) = N(2)-succinyl-L-ornithine + 2 NH4(+) + CO2. Its pathway is amino-acid degradation; L-arginine degradation via AST pathway; L-glutamate and succinate from L-arginine: step 2/5. Catalyzes the hydrolysis of N(2)-succinylarginine into N(2)-succinylornithine, ammonia and CO(2). This is N-succinylarginine dihydrolase from Salmonella enteritidis PT4 (strain P125109).